Consider the following 508-residue polypeptide: Photosystem II CP47 reaction center protein (508 aa).

Helical transmembrane passes span 21–36, 101–115, 140–156, 203–218, 237–252, and 457–472; these read AVHL…WAGS, IVLS…IWHW, GIHL…FGAF, IAAG…FHLS, VLSS…AFVV, and TFAL…HGAR.

Belongs to the PsbB/PsbC family. PsbB subfamily. PSII is composed of 1 copy each of membrane proteins PsbA, PsbB, PsbC, PsbD, PsbE, PsbF, PsbH, PsbI, PsbJ, PsbK, PsbL, PsbM, PsbT, PsbX, PsbY, PsbZ, Psb30/Ycf12, at least 3 peripheral proteins of the oxygen-evolving complex and a large number of cofactors. It forms dimeric complexes. Requires Binds multiple chlorophylls. PSII binds additional chlorophylls, carotenoids and specific lipids. as cofactor.

The protein resides in the plastid. It localises to the chloroplast thylakoid membrane. Functionally, one of the components of the core complex of photosystem II (PSII). It binds chlorophyll and helps catalyze the primary light-induced photochemical processes of PSII. PSII is a light-driven water:plastoquinone oxidoreductase, using light energy to abstract electrons from H(2)O, generating O(2) and a proton gradient subsequently used for ATP formation. In Anthoceros angustus (Hornwort), this protein is Photosystem II CP47 reaction center protein.